A 734-amino-acid chain; its full sequence is Photosystem I P700 chlorophyll a apoprotein A2 (734 aa).

Transmembrane regions (helical) follow at residues 46 to 69, 135 to 158, 175 to 199, 273 to 291, 330 to 353, 369 to 395, 417 to 439, and 517 to 535; these read IFASHFGQLAIIFLWTSGNLFHVA, LYTGALFLLFLSTLSLVAGWLHLQ, LNHHLSGLFGVSSLAWTGHLVHVAI, IAHHHLAIAFIFLIAGHMY, IHFQLGLALASLGVITSLVAQHMY, AALYTHHQYIAGFIMTGAFAHGAIFFI, AIISHLSWASLFLGFHTLGLYVH, and FLVHHAIALGLHTTTLILV. [4Fe-4S] cluster is bound by residues C559 and C568. The next 2 membrane-spanning stretches (helical) occupy residues 575 to 596 and 643 to 665; these read AFYLAVFWMLNTIGWVTFYWHW and LSVWAWMFLFGHLVWATGFMFLI. Chlorophyll a is bound by residues H654, M662, and Y670. W671 contributes to the phylloquinone binding site. The helical transmembrane segment at 707-727 threads the bilayer; it reads LVGLAHFSVGYIFTYAAFLIA.

Belongs to the PsaA/PsaB family. The PsaA/B heterodimer binds the P700 chlorophyll special pair and subsequent electron acceptors. PSI consists of a core antenna complex that captures photons, and an electron transfer chain that converts photonic excitation into a charge separation. The eukaryotic PSI reaction center is composed of at least 11 subunits. The cofactor is P700 is a chlorophyll a/chlorophyll a' dimer, A0 is one or more chlorophyll a, A1 is one or both phylloquinones and FX is a shared 4Fe-4S iron-sulfur center..

Its subcellular location is the plastid. The protein resides in the chloroplast thylakoid membrane. The enzyme catalyses reduced [plastocyanin] + hnu + oxidized [2Fe-2S]-[ferredoxin] = oxidized [plastocyanin] + reduced [2Fe-2S]-[ferredoxin]. Functionally, psaA and PsaB bind P700, the primary electron donor of photosystem I (PSI), as well as the electron acceptors A0, A1 and FX. PSI is a plastocyanin-ferredoxin oxidoreductase, converting photonic excitation into a charge separation, which transfers an electron from the donor P700 chlorophyll pair to the spectroscopically characterized acceptors A0, A1, FX, FA and FB in turn. Oxidized P700 is reduced on the lumenal side of the thylakoid membrane by plastocyanin. The polypeptide is Photosystem I P700 chlorophyll a apoprotein A2 (Agrostis stolonifera (Creeping bentgrass)).